The following is a 341-amino-acid chain: ATPase GET3 (341 aa).

Position 34–41 (34–41 (KGGVGKTT)) interacts with ATP. Aspartate 63 is an active-site residue. Positions 245 and 272 each coordinate ATP. Zn(2+)-binding residues include cysteine 283 and cysteine 286.

Belongs to the arsA ATPase family. Homodimer.

The protein resides in the cytoplasm. Its subcellular location is the endoplasmic reticulum. In terms of biological role, ATPase required for the post-translational delivery of tail-anchored (TA) proteins to the endoplasmic reticulum. Recognizes and selectively binds the transmembrane domain of TA proteins in the cytosol. This complex then targets to the endoplasmic reticulum by membrane-bound receptors, where the tail-anchored protein is released for insertion. This process is regulated by ATP binding and hydrolysis. ATP binding drives the homodimer towards the closed dimer state, facilitating recognition of newly synthesized TA membrane proteins. ATP hydrolysis is required for insertion. Subsequently, the homodimer reverts towards the open dimer state, lowering its affinity for the membrane-bound receptor, and returning it to the cytosol to initiate a new round of targeting. The protein is ATPase GET3 of Paracoccidioides brasiliensis (strain Pb18).